The following is a 265-amino-acid chain: Shikimate dehydrogenase (NADP(+)) (265 aa).

Shikimate is bound by residues 14-16 (SLS) and T61. Catalysis depends on K65, which acts as the Proton acceptor. Positions 85 and 100 each coordinate shikimate. NADP(+)-binding positions include 123–127 (GAGGA), 146–151 (NRTESK), and A209. Residue Y211 participates in shikimate binding. G232 provides a ligand contact to NADP(+).

It belongs to the shikimate dehydrogenase family. Homodimer.

It catalyses the reaction shikimate + NADP(+) = 3-dehydroshikimate + NADPH + H(+). The protein operates within metabolic intermediate biosynthesis; chorismate biosynthesis; chorismate from D-erythrose 4-phosphate and phosphoenolpyruvate: step 4/7. Involved in the biosynthesis of the chorismate, which leads to the biosynthesis of aromatic amino acids. Catalyzes the reversible NADPH linked reduction of 3-dehydroshikimate (DHSA) to yield shikimate (SA). This is Shikimate dehydrogenase (NADP(+)) from Haloarcula marismortui (strain ATCC 43049 / DSM 3752 / JCM 8966 / VKM B-1809) (Halobacterium marismortui).